The sequence spans 588 residues: Sulfite reductase [NADPH] hemoprotein beta-component (588 aa).

Residues 1–10 show a composition bias toward basic and acidic residues; it reads MSDKKQKGLE. A disordered region spans residues 1 to 20; the sequence is MSDKKQKGLEWQDNPLSDNE. [4Fe-4S] cluster-binding residues include C443, C449, C488, and C492. Residue C492 participates in siroheme binding.

The protein belongs to the nitrite and sulfite reductase 4Fe-4S domain family. In terms of assembly, alpha(8)-beta(8). The alpha component is a flavoprotein, the beta component is a hemoprotein. The cofactor is siroheme. [4Fe-4S] cluster is required as a cofactor.

It catalyses the reaction hydrogen sulfide + 3 NADP(+) + 3 H2O = sulfite + 3 NADPH + 4 H(+). The protein operates within sulfur metabolism; hydrogen sulfide biosynthesis; hydrogen sulfide from sulfite (NADPH route): step 1/1. Functionally, component of the sulfite reductase complex that catalyzes the 6-electron reduction of sulfite to sulfide. This is one of several activities required for the biosynthesis of L-cysteine from sulfate. This chain is Sulfite reductase [NADPH] hemoprotein beta-component, found in Mannheimia succiniciproducens (strain KCTC 0769BP / MBEL55E).